We begin with the raw amino-acid sequence, 553 residues long: MATDTSQGELVHPKALPLIVGAQLIHADKLGEKVEDSTMPIRRTVNSTRETPPKSKLAEGEEEKPEPDISSEESVSTVEEQENETPPATSSEAEQPKGEPENEEKEENKSSEETKKDEKDQSKEKEKKVKKTIPSWATLSASQLARAQKQTPMASSPRPKMDAILTEAIKACFQKSGASVVAIRKYIIHKYPSLELERRGYLLKQALKRELNRGVIKQVKGKGASGSFVVVQKSRKTPQKSRNRKNRSSAVDPEPQVKLEDVLPLAFTRLCEPKEASYSLIRKYVSQYYPKLRVDIRPQLLKNALQRAVERGQLEQITGKGASGTFQLKKSGEKPLLGGSLMEYAILSAIAAMNEPKTCSTTALKKYVLENHPGTNSNYQMHLLKKTLQKCEKNGWMEQISGKGFSGTFQLCFPYYPSPGVLFPKKEPDDSRDEDEDEDESSEEDSEDEEPPPKRRLQKKTPAKSPGKAASVKQRGSKPAPKVSAAQRGKARPLPKKAPPKAKTPAKKTRPSSTVIKKPSGGSSKKPATSARKEVKLPGKGKSTMKKSFRVKK.

At A2 the chain carries N-acetylalanine. S6 carries the phosphoserine modification. 2 disordered regions span residues 29–134 (KLGE…KTIP) and 140–159 (SASQ…SPRP). T51 bears the Phosphothreonine mark. A compositionally biased stretch (acidic residues) spans 60 to 71 (GEEEKPEPDISS). A Glycyl lysine isopeptide (Lys-Gly) (interchain with G-Cter in SUMO2) cross-link involves residue K64. Phosphothreonine is present on T85. Positions 94–127 (EQPKGEPENEEKEENKSSEETKKDEKDQSKEKEK) are enriched in basic and acidic residues. K97 is covalently cross-linked (Glycyl lysine isopeptide (Lys-Gly) (interchain with G-Cter in SUMO2)). The span at 140–154 (SASQLARAQKQTPMA) shows a compositional bias: polar residues. 3 positions are modified to phosphoserine: S142, S155, and S156. In terms of domain architecture, H15 1 spans 157 to 232 (PRPKMDAILT…GASGSFVVVQ (76 aa)). K190 is modified (N6-acetyllysine). A disordered region spans residues 230–255 (VVQKSRKTPQKSRNRKNRSSAVDPEP). A compositionally biased stretch (basic residues) spans 233–247 (KSRKTPQKSRNRKNR). Residues S248 and S249 each carry the phosphoserine modification. A PxVxL motif motif is present at residues 255 to 259 (PQVKL). H15 domains are found at residues 255-330 (PQVK…QLKK) and 337-413 (LGGS…QLCF). K258 is covalently cross-linked (Glycyl lysine isopeptide (Lys-Gly) (interchain with G-Cter in SUMO2)). Residues 422–553 (LFPKKEPDDS…TMKKSFRVKK (132 aa)) are disordered. The span at 430-450 (DSRDEDEDEDESSEEDSEDEE) shows a compositional bias: acidic residues. 3 positions are modified to phosphoserine: S441, S442, and S446. Residues 489 to 510 (GKARPLPKKAPPKAKTPAKKTR) are compositionally biased toward basic residues. The segment covering 517 to 527 (KKPSGGSSKKP) has biased composition (low complexity). The span at 543-553 (STMKKSFRVKK) shows a compositional bias: basic residues.

In terms of assembly, interacts (via PxVxL motif) with CBX5 (via Trp-174).

Its subcellular location is the nucleus. It localises to the chromosome. Its function is as follows. Component of heterochromatin that maintains heterochromatin integrity during G1/S progression and regulates the duration of G1 phase to critically influence cell proliferative capacity. Mediates chromatin condensation during hypoxia, leading to increased tumor cell viability, radio-resistance, chemo-resistance and self-renewal. This chain is Heterochromatin protein 1-binding protein 3 (HP1BP3), found in Homo sapiens (Human).